Here is a 441-residue protein sequence, read N- to C-terminus: ATP-dependent protease ATPase subunit HslU (441 aa).

ATP is bound by residues isoleucine 18, 60 to 65 (GVGKTE), aspartate 254, glutamate 319, and arginine 391.

Belongs to the ClpX chaperone family. HslU subfamily. In terms of assembly, a double ring-shaped homohexamer of HslV is capped on each side by a ring-shaped HslU homohexamer. The assembly of the HslU/HslV complex is dependent on binding of ATP.

Its subcellular location is the cytoplasm. In terms of biological role, ATPase subunit of a proteasome-like degradation complex; this subunit has chaperone activity. The binding of ATP and its subsequent hydrolysis by HslU are essential for unfolding of protein substrates subsequently hydrolyzed by HslV. HslU recognizes the N-terminal part of its protein substrates and unfolds these before they are guided to HslV for hydrolysis. This chain is ATP-dependent protease ATPase subunit HslU, found in Shewanella halifaxensis (strain HAW-EB4).